Reading from the N-terminus, the 349-residue chain is KH domain-containing, RNA-binding, signal transduction-associated protein 2 (349 aa).

A KH domain is found at Leu-65 to Ile-135. Disordered regions lie at residues Ser-181 to Ala-263 and Glu-320 to Tyr-349. Residues Arg-218–Gly-231 show a composition bias toward low complexity. Omega-N-methylarginine occurs at positions 230 and 240. Residues Gly-340 to Tyr-349 are compositionally biased toward basic and acidic residues.

It belongs to the KHDRBS family. Self-associates to form homooligomers. Interacts with SAFB, SFRS9 and YTHDC1. Found in a complex with KHDRBS1, KHDRBS2 and KHDRBS3. Interacts with RBMX. Interacts with the SH3 domains of FYN and PLCG1. Interacts with the SH2 domains of FYN, GRAP2, PLCG1 and RASA1. Interacts with RBMX. In terms of processing, methylated. Post-translationally, phosphorylated on tyrosine residues by FYN. Tyrosine phosphorylated by PTK6 and SRC. Tyrosine phosphorylated by SRC during mitosis. In terms of tissue distribution, expressed in the cortex, cerebellum, striatum, midbrain, brainstem and thalamus of the brain (at protein level). Expressed in neurons (at protein level). Expressed in brain and testis. Expressed in the dentate gyrus of the hippocampus.

Its subcellular location is the nucleus. Functionally, RNA-binding protein that plays a role in the regulation of alternative splicing and influences mRNA splice site selection and exon inclusion. Its phosphorylation by FYN inhibits its ability to regulate splice site selection. Induces an increased concentration-dependent incorporation of exon in CD44 pre-mRNA by direct binding to purine-rich exonic enhancer. May function as an adapter protein for Src kinases during mitosis. Binds both poly(A) and poly(U) homopolymers. Phosphorylation by PTK6 inhibits its RNA-binding ability. This is KH domain-containing, RNA-binding, signal transduction-associated protein 2 (Khdrbs2) from Rattus norvegicus (Rat).